Here is a 574-residue protein sequence, read N- to C-terminus: MNFNVWNVKEMLSIPSGSGITKPSNWNNNQTDCSLSDSQFLFGSQFCPENSETLLPSLDAGACLRHPKQTQQNSVDSEPSIFIKYQAKPQLLGGDTKDESLFSLPLPVGKSKGLSKQFEEKKRRATDQSDSETLHSFVSHFPEVINKLQTSVEKTEENLSSRSQSILDSVETIAKTFQETARVQHDLMVESVRDKGSMEQAILEIQRTCAARQAEFMEMKSTLKNLEVLVVEQTKNLQQFCDNLSQLIVPGILEELKKFTSVPQVAGHLKDSTSQTSPSLTQSLHFTRQEKHPSEEPATWQAQEAPAGNPSTSSQRPGECGVWDEGAESGVFQKAALPTDGLHRGDGHVKNKTVPTYCKNWVMTTRSVSNHFSNLPSQRAGNGQGLMAQGASQRDVSKFEARVKNACPEYGPQSMCSFDSLEQSATEQKGRPCRKRRRGKKQQPQRSKRGGLLDRKQGQTSKAACAFIARHHCPQSPVCDPQGPLICWLTPRSSTKSTCHILGGTGETSQTARAAQGNLVQHSQRSSTDSSSQGDQQINWFSDLSLENLEPPQCKKGGTNLLCDPDFDSSDDNF.

A disordered region spans residues 113–133 (GLSKQFEEKKRRATDQSDSET). Positions 117–127 (QFEEKKRRATD) are enriched in basic and acidic residues. Positions 217-240 (MEMKSTLKNLEVLVVEQTKNLQQF) form a coiled coil. Disordered regions lie at residues 267-324 (GHLK…GVWD), 372-393 (FSNLPSQRAGNGQGLMAQGASQ), and 426-457 (TEQKGRPCRKRRRGKKQQPQRSKRGGLLDRKQ). Residues 272–284 (STSQTSPSLTQSL) show a composition bias toward low complexity. Residues 372–381 (FSNLPSQRAG) show a composition bias toward polar residues. Basic residues predominate over residues 431–449 (RPCRKRRRGKKQQPQRSKR). Phosphoserine is present on residues S476, S569, and S570.

In terms of assembly, part of the MCD recombinosome complex, at least composed of IHO1, REC114 and MEI4. Interacts with REC114. Interacts with MEI4. Interacts with HORMAD1. Interacts with ANKRD31. In terms of tissue distribution, detected in spermatocytes and testis (at protein level).

Its subcellular location is the chromosome. Its function is as follows. Required for DNA double-strand breaks (DSBs) formation in unsynapsed regions during meiotic recombination. Probably acts by forming a complex with MEI4 and REC114, which activates DSBs formation in unsynapsed regions, an essential step to ensure completion of synapsis. Not required for HORMAD1 functions in pairing-independent synaptonemal complex formation, ATR recruitment to unsynapsed axes, meiotic silencing of unsynapsed chromatin (MSUC) or meiotic surveillance. The polypeptide is Interactor of HORMAD1 protein 1 (Mus musculus (Mouse)).